A 124-amino-acid chain; its full sequence is MNLIKQFEQEQIKKLTQGKSIPNFRPGDTVKVNLRIIEGANERIQAYQGVVIARANRSISSSFTVRKISHGKGIERKFMLYSPLISSIELIKKGVVRRAKLYYLRNLQGRKAKIREKIFSKDNQ.

It belongs to the bacterial ribosomal protein bL19 family.

Its function is as follows. This protein is located at the 30S-50S ribosomal subunit interface and may play a role in the structure and function of the aminoacyl-tRNA binding site. This chain is Large ribosomal subunit protein bL19, found in Orientia tsutsugamushi (strain Boryong) (Rickettsia tsutsugamushi).